The chain runs to 252 residues: Ribosomal RNA small subunit methyltransferase J (252 aa).

Residues 101 to 102 (RD), 117 to 118 (ER), 153 to 154 (SS), and D171 contribute to the S-adenosyl-L-methionine site.

This sequence belongs to the methyltransferase superfamily. RsmJ family.

It is found in the cytoplasm. It catalyses the reaction guanosine(1516) in 16S rRNA + S-adenosyl-L-methionine = N(2)-methylguanosine(1516) in 16S rRNA + S-adenosyl-L-homocysteine + H(+). Its function is as follows. Specifically methylates the guanosine in position 1516 of 16S rRNA. The chain is Ribosomal RNA small subunit methyltransferase J from Salmonella schwarzengrund (strain CVM19633).